Here is a 209-residue protein sequence, read N- to C-terminus: MLPRHSCSLLLFLLLLPSVPMEPQPPSSTLPPFLAPEWDLLSPRVALSRGTPAGPPLLFLLEAGAYGEPAGAPANRSRRGVSETAPASRRGELAVCDAVSGWVTDRRTAVDLRGREVEVLGEVPAAGGSPLRQYFFETRCKAESAGEGGPGVGGGGCRGVDRRHWLSECKAKQSYVRALTADSQGRVGWRWIRIDTACVCTLLSRTGRA.

An N-terminal signal peptide occupies residues 1-21; the sequence is MLPRHSCSLLLFLLLLPSVPM. Positions 22-79 are excised as a propeptide; that stretch reads EPQPPSSTLPPFLAPEWDLLSPRVALSRGTPAGPPLLFLLEAGAYGEPAGAPANRSRR. N-linked (GlcNAc...) asparagine glycosylation is present at Asn75. 3 disulfide bridges follow: Cys96-Cys169, Cys140-Cys198, and Cys157-Cys200.

This sequence belongs to the NGF-beta family. In terms of tissue distribution, expressed in thymus, muscle, ovary, brain, heart, stomach and kidney. Expressed in both embryo and adult tissues.

Its subcellular location is the secreted. In terms of biological role, target-derived survival factor for peripheral sensory sympathetic neurons. May promote ameloblast differentiation and subsequent reduction in proliferation of ameloblasts. In Rattus norvegicus (Rat), this protein is Neurotrophin-4 (Ntf4).